A 1684-amino-acid polypeptide reads, in one-letter code: Latrophilin Cirl (1684 aa).

The Extracellular segment spans residues 1–765 (MASNNYIQIM…LFTMFDGNMR (765 aa)). The SUEL-type lectin domain occupies 21–110 (ACEGKKLTIE…KYLEAHYQCV (90 aa)). Residues Asn138, Asn251, Asn297, and Asn336 are each glycosylated (N-linked (GlcNAc...) asparagine). The interval 181-300 (PPATHATPPG…GPSVSSNGSA (120 aa)) is disordered. Polar residues-rich tracts occupy residues 250–260 (SNATAPSNTRI) and 278–300 (KSSP…NGSA). The disordered stretch occupies residues 370–391 (SFDEDDEEMAGTSTTTPMSTSS). Residues 381 to 391 (TSTTTPMSTSS) are compositionally biased toward low complexity. 4 N-linked (GlcNAc...) asparagine glycosylation sites follow: Asn396, Asn653, Asn701, and Asn728. The GAIN-B domain maps to 559–752 (RSVVQKVKNI…AILMDVVDEH (194 aa)). Cystine bridges form between Cys707/Cys734 and Cys722/Cys736. The segment at 707–752 (CVFWNYIDHAWSANGCSLESTNRTHSVCSCNHLTNFAILMDVVDEH) is GPS. A helical membrane pass occupies residues 766 to 786 (IFIYISIAICVVFIVIALLTL). Residues 787-799 (KLFNGVFVKSART) lie on the Cytoplasmic side of the membrane. The chain crosses the membrane as a helical span at residues 800–820 (SIYINIYICLLAIELLFLLGI). Residues 821–826 (EQTETS) are Extracellular-facing. The chain crosses the membrane as a helical span at residues 827 to 847 (IFCGFITVFLHCAILSGTSWF). Topologically, residues 848–873 (CYEAFHSYSTLTSDELLLEVDQTPKV) are cytoplasmic. The chain crosses the membrane as a helical span at residues 874-894 (NCYYLLSYGLSLSVVAISLVI). Over 895 to 918 (NPSTYTQNDYCVLMEANAVFYATF) the chain is Extracellular. A helical membrane pass occupies residues 919-939 (VAPVLIFFMAAIGYTFLSWII). Residues 940 to 966 (MCRKSRTGLKTKEHTRLATVRFDIRCS) lie on the Cytoplasmic side of the membrane. Residues 967-987 (FVFFLLLSAVWCSAYFYLRGA) form a helical membrane-spanning segment. Residues 988 to 994 (KMDEDVT) are Extracellular-facing. Residues 995–1015 (GIYGYNFICFNTLLGLYIFVF) form a helical membrane-spanning segment. The Cytoplasmic portion of the chain corresponds to 1016–1684 (HCIQNEKIRR…VRCYLEPLAK (669 aa)). The interval 1080-1100 (PLGTNDDAHDEQQQQQHMSAT) is disordered. A phosphoserine mark is found at Ser1156, Ser1247, and Ser1254. Disordered stretches follow at residues 1228–1255 (KPNS…LHSR), 1270–1353 (KTKP…APPP), 1441–1520 (SRYG…LPPQ), and 1587–1669 (SMRG…SAML). Residues 1298–1314 (QQQQQLRQQRQQQQQQL) are compositionally biased toward low complexity. A phosphoserine mark is found at Ser1315 and Ser1316. Positions 1328 to 1348 (LHLQHQQQQQQQRRAGGQQQL) are enriched in low complexity. A compositionally biased stretch (polar residues) spans 1455-1466 (RNQQQQQHSLAQ). Composition is skewed to acidic residues over residues 1476–1489 (DEDD…EETT) and 1499–1512 (CDEE…DMED). Positions 1631 to 1654 (QQLQKLSPQSTTSSSSHTSHSNPH) are enriched in low complexity.

It belongs to the G-protein coupled receptor 2 family. LN-TM7 subfamily. Forms a heterodimer, consisting of a large extracellular region non-covalently linked to a seven-transmembrane moiety. Post-translationally, proteolytically cleaved into 2 subunits, an extracellular subunit and a seven-transmembrane subunit.

The protein resides in the cell membrane. The sequence is that of Latrophilin Cirl from Drosophila persimilis (Fruit fly).